Consider the following 444-residue polypeptide: Phosphoglucosamine mutase (444 aa).

S101 functions as the Phosphoserine intermediate in the catalytic mechanism. Mg(2+) contacts are provided by S101, D239, D241, and D243. S101 carries the post-translational modification Phosphoserine.

Belongs to the phosphohexose mutase family. The cofactor is Mg(2+). In terms of processing, activated by phosphorylation.

It catalyses the reaction alpha-D-glucosamine 1-phosphate = D-glucosamine 6-phosphate. Catalyzes the conversion of glucosamine-6-phosphate to glucosamine-1-phosphate. This Alcanivorax borkumensis (strain ATCC 700651 / DSM 11573 / NCIMB 13689 / SK2) protein is Phosphoglucosamine mutase.